Consider the following 658-residue polypeptide: Glycogen debranching enzyme (658 aa).

Asp336 functions as the Nucleophile in the catalytic mechanism. The active-site Proton donor is the Glu371.

The protein belongs to the glycosyl hydrolase 13 family.

The catalysed reaction is Hydrolysis of (1-&gt;6)-alpha-D-glucosidic linkages to branches with degrees of polymerization of three or four glucose residues in limit dextrin.. Its pathway is glycan degradation; glycogen degradation. Functionally, removes maltotriose and maltotetraose chains that are attached by 1,6-alpha-linkage to the limit dextrin main chain, generating a debranched limit dextrin. This is Glycogen debranching enzyme from Klebsiella pneumoniae subsp. pneumoniae (strain ATCC 700721 / MGH 78578).